The following is a 289-amino-acid chain: ATP synthase subunit a (289 aa).

Transmembrane regions (helical) follow at residues 41–61 (KATALTIFAALFVGVIFWLGF), 101–121 (YLLVLFSFVLVSNVLAIIPAA), 129–149 (IAVPMVLAVVTWVMFIYAGIK), 166–186 (TAPLAIRLLLGPIEILSTLIV), 189–209 (FTLAIRLFANMFAGHLLLLVF), 222–242 (FVFGVASLLVAIVLTAFELVI), and 244–264 (ALQAYIITILTAAYIGGAMAH).

It belongs to the ATPase A chain family. F-type ATPases have 2 components, CF(1) - the catalytic core - and CF(0) - the membrane proton channel. CF(1) has five subunits: alpha(3), beta(3), gamma(1), delta(1), epsilon(1). CF(0) has three main subunits: a(1), b(2) and c(9-12). The alpha and beta chains form an alternating ring which encloses part of the gamma chain. CF(1) is attached to CF(0) by a central stalk formed by the gamma and epsilon chains, while a peripheral stalk is formed by the delta and b chains.

Its subcellular location is the cell membrane. Its function is as follows. Key component of the proton channel; it plays a direct role in the translocation of protons across the membrane. This Frankia alni (strain DSM 45986 / CECT 9034 / ACN14a) protein is ATP synthase subunit a.